The primary structure comprises 137 residues: Large ribosomal subunit protein uL16 (137 aa).

Belongs to the universal ribosomal protein uL16 family. In terms of assembly, part of the 50S ribosomal subunit.

Binds 23S rRNA and is also seen to make contacts with the A and possibly P site tRNAs. This Rhodopseudomonas palustris (strain BisB18) protein is Large ribosomal subunit protein uL16.